The chain runs to 641 residues: Threonine--tRNA ligase (641 aa).

One can recognise a TGS domain in the interval 1 to 61; it reads MPAITLPDGS…ADDASVRFIT (61 aa). The tract at residues 243–536 is catalytic; that stretch reads DHRRIGREMD…LIEQHAGRFP (294 aa). Cysteine 336, histidine 387, and histidine 513 together coordinate Zn(2+).

It belongs to the class-II aminoacyl-tRNA synthetase family. In terms of assembly, homodimer. Zn(2+) is required as a cofactor.

Its subcellular location is the cytoplasm. The enzyme catalyses tRNA(Thr) + L-threonine + ATP = L-threonyl-tRNA(Thr) + AMP + diphosphate + H(+). Catalyzes the attachment of threonine to tRNA(Thr) in a two-step reaction: L-threonine is first activated by ATP to form Thr-AMP and then transferred to the acceptor end of tRNA(Thr). Also edits incorrectly charged L-seryl-tRNA(Thr). The protein is Threonine--tRNA ligase of Gluconacetobacter diazotrophicus (strain ATCC 49037 / DSM 5601 / CCUG 37298 / CIP 103539 / LMG 7603 / PAl5).